The chain runs to 940 residues: Isoleucine--tRNA ligase (940 aa).

Positions 58 to 68 (PYANGDIHIGH) match the 'HIGH' region motif. An L-isoleucyl-5'-AMP-binding site is contributed by Glu-564. The 'KMSKS' region motif lies at 605–609 (KMSKS). ATP is bound at residue Lys-608. 4 residues coordinate Zn(2+): Cys-903, Cys-906, Cys-923, and Cys-926.

Belongs to the class-I aminoacyl-tRNA synthetase family. IleS type 1 subfamily. As to quaternary structure, monomer. Zn(2+) serves as cofactor.

It localises to the cytoplasm. The enzyme catalyses tRNA(Ile) + L-isoleucine + ATP = L-isoleucyl-tRNA(Ile) + AMP + diphosphate. Catalyzes the attachment of isoleucine to tRNA(Ile). As IleRS can inadvertently accommodate and process structurally similar amino acids such as valine, to avoid such errors it has two additional distinct tRNA(Ile)-dependent editing activities. One activity is designated as 'pretransfer' editing and involves the hydrolysis of activated Val-AMP. The other activity is designated 'posttransfer' editing and involves deacylation of mischarged Val-tRNA(Ile). This is Isoleucine--tRNA ligase from Shewanella pealeana (strain ATCC 700345 / ANG-SQ1).